A 546-amino-acid polypeptide reads, in one-letter code: Chaperonin GroEL (546 aa).

ATP is bound by residues 30–33 (TLGP), K51, 87–91 (DGTTT), G415, and D495.

This sequence belongs to the chaperonin (HSP60) family. As to quaternary structure, forms a cylinder of 14 subunits composed of two heptameric rings stacked back-to-back. Interacts with the co-chaperonin GroES.

The protein resides in the cytoplasm. It catalyses the reaction ATP + H2O + a folded polypeptide = ADP + phosphate + an unfolded polypeptide.. Its function is as follows. Together with its co-chaperonin GroES, plays an essential role in assisting protein folding. The GroEL-GroES system forms a nano-cage that allows encapsulation of the non-native substrate proteins and provides a physical environment optimized to promote and accelerate protein folding. This Alteromonas mediterranea (strain DSM 17117 / CIP 110805 / LMG 28347 / Deep ecotype) protein is Chaperonin GroEL.